Here is a 262-residue protein sequence, read N- to C-terminus: 3-methyl-2-oxobutanoate hydroxymethyltransferase (262 aa).

Residues Asp-44 and Asp-83 each contribute to the Mg(2+) site. 3-methyl-2-oxobutanoate contacts are provided by residues 44–45 (DS), Asp-83, and Lys-112. Glu-114 is a binding site for Mg(2+). The active-site Proton acceptor is the Glu-177.

Belongs to the PanB family. In terms of assembly, homodecamer; pentamer of dimers. Mg(2+) is required as a cofactor.

It localises to the cytoplasm. It catalyses the reaction 3-methyl-2-oxobutanoate + (6R)-5,10-methylene-5,6,7,8-tetrahydrofolate + H2O = 2-dehydropantoate + (6S)-5,6,7,8-tetrahydrofolate. It participates in cofactor biosynthesis; coenzyme A biosynthesis. Functionally, catalyzes the reversible reaction in which hydroxymethyl group from 5,10-methylenetetrahydrofolate is transferred onto alpha-ketoisovalerate to form ketopantoate. In Metallosphaera sedula (strain ATCC 51363 / DSM 5348 / JCM 9185 / NBRC 15509 / TH2), this protein is 3-methyl-2-oxobutanoate hydroxymethyltransferase.